The primary structure comprises 125 residues: Large ribosomal subunit protein bL12 (125 aa).

This sequence belongs to the bacterial ribosomal protein bL12 family. As to quaternary structure, homodimer. Part of the ribosomal stalk of the 50S ribosomal subunit. Forms a multimeric L10(L12)X complex, where L10 forms an elongated spine to which 2 to 4 L12 dimers bind in a sequential fashion. Binds GTP-bound translation factors.

Functionally, forms part of the ribosomal stalk which helps the ribosome interact with GTP-bound translation factors. Is thus essential for accurate translation. In Methylobacterium radiotolerans (strain ATCC 27329 / DSM 1819 / JCM 2831 / NBRC 15690 / NCIMB 10815 / 0-1), this protein is Large ribosomal subunit protein bL12.